Consider the following 563-residue polypeptide: Arginine--tRNA ligase (563 aa).

The 'HIGH' region motif lies at 122 to 132 (PNIAKPISMGH).

Belongs to the class-I aminoacyl-tRNA synthetase family. As to quaternary structure, monomer.

It localises to the cytoplasm. It catalyses the reaction tRNA(Arg) + L-arginine + ATP = L-arginyl-tRNA(Arg) + AMP + diphosphate. The sequence is that of Arginine--tRNA ligase from Latilactobacillus sakei subsp. sakei (strain 23K) (Lactobacillus sakei subsp. sakei).